The chain runs to 111 residues: uncharacterized protein (111 aa).

This is an uncharacterized protein from Ureaplasma parvum serovar 3 (strain ATCC 700970).